Reading from the N-terminus, the 559-residue chain is Phosphatase and actin regulator 3 (559 aa).

The interval 1-65 (MAASEDGSGC…GIRTPPVRRN (65 aa)) is disordered. Over residues 15 to 24 (GRSQSDPSVL) the composition is skewed to polar residues. A compositionally biased stretch (low complexity) spans 25–35 (TDSSATSSADA). Thr70 is modified (phosphothreonine). The disordered stretch occupies residues 82–342 (KKKNEKLKQT…VERGKEREEA (261 aa)). Residues 93–118 (SALEKKMAGRQGREELIKKGLLEMME) form an RPEL 1 repeat. The span at 95–113 (LEKKMAGRQGREELIKKGL) shows a compositional bias: basic and acidic residues. Residues 134–151 (SVQSEPPTPKSETLTSED) are compositionally biased toward polar residues. The span at 229–240 (PSPPLLPTPPPK) shows a compositional bias: pro residues. Ser230 is modified (phosphoserine). At Thr236 the chain carries Phosphothreonine. 2 stretches are compositionally biased toward polar residues: residues 248-262 (NVTG…SSMK) and 270-281 (GQLSTPTGSPHL). Residues 293 to 342 (VIEELHRALATKHRQDSFQGRESKGSPKKRLDVRLSRTSSVERGKEREEA) show a composition bias toward basic and acidic residues. Residues 346–369 (DGALENKRTAAKESEENKENLIIN) adopt a coiled-coil conformation. 3 RPEL repeats span residues 401 to 426 (ELLA…PRRT), 439 to 464 (MKLS…KQRN), and 477 to 502 (QRLT…IRFS). Positions 438-518 (EMKLSKRLSQ…KAQDYDRRAD (81 aa)) are required for PP1CA binding and inhibition of PP1 activity. A coiled-coil region spans residues 450–486 (AVEELERRNILKQRNDQTEQEERREIKQRLTRKLNQR).

Belongs to the phosphatase and actin regulator family. Binds actin and PPP1CA; thus inhibiting the protein phosphatase 1 (PP1) activity. As to expression, abundantly expressed in brain. Also found in several tumors such as lung carcinomas, nervous tumors and HL-60 leukemia cells. Isoform 3 is the major form in U-937, GOTO and HL-60 leukemia cells.

The protein localises to the nucleus matrix. The protein is Phosphatase and actin regulator 3 (PHACTR3) of Homo sapiens (Human).